The primary structure comprises 273 residues: Dermonecrotic toxin LdSicTox-alphaIB3aiv (273 aa).

His-5 is an active-site residue. 2 residues coordinate Mg(2+): Glu-25 and Asp-27. The active-site Nucleophile is His-41. 2 cysteine pairs are disulfide-bonded: Cys-45/Cys-51 and Cys-47/Cys-190. Mg(2+) is bound at residue Asp-85.

The protein belongs to the arthropod phospholipase D family. Class II subfamily. Requires Mg(2+) as cofactor. As to expression, expressed by the venom gland.

It localises to the secreted. The catalysed reaction is an N-(acyl)-sphingosylphosphocholine = an N-(acyl)-sphingosyl-1,3-cyclic phosphate + choline. It catalyses the reaction an N-(acyl)-sphingosylphosphoethanolamine = an N-(acyl)-sphingosyl-1,3-cyclic phosphate + ethanolamine. It carries out the reaction a 1-acyl-sn-glycero-3-phosphocholine = a 1-acyl-sn-glycero-2,3-cyclic phosphate + choline. The enzyme catalyses a 1-acyl-sn-glycero-3-phosphoethanolamine = a 1-acyl-sn-glycero-2,3-cyclic phosphate + ethanolamine. Dermonecrotic toxins cleave the phosphodiester linkage between the phosphate and headgroup of certain phospholipids (sphingolipid and lysolipid substrates), forming an alcohol (often choline) and a cyclic phosphate. This toxin acts on sphingomyelin (SM). It may also act on ceramide phosphoethanolamine (CPE), lysophosphatidylcholine (LPC) and lysophosphatidylethanolamine (LPE), but not on lysophosphatidylserine (LPS), and lysophosphatidylglycerol (LPG). It acts by transphosphatidylation, releasing exclusively cyclic phosphate products as second products. Induces dermonecrosis, hemolysis, increased vascular permeability, edema, inflammatory response, and platelet aggregation. This Loxosceles deserta (Desert recluse spider) protein is Dermonecrotic toxin LdSicTox-alphaIB3aiv.